The chain runs to 914 residues: Beta-mannosidase A (914 aa).

A signal peptide spans 1 to 20 (MRFTATAAALVASSIPATLG). Residues Asn-39, Asn-79, Asn-230, Asn-265, Asn-299, Asn-309, and Asn-330 are each glycosylated (N-linked (GlcNAc...) asparagine). Glu-462 functions as the Proton donor in the catalytic mechanism. 8 N-linked (GlcNAc...) asparagine glycosylation sites follow: Asn-591, Asn-614, Asn-641, Asn-721, Asn-744, Asn-773, Asn-784, and Asn-909.

It belongs to the glycosyl hydrolase 2 family. Beta-mannosidase A subfamily. Homodimer.

Its subcellular location is the secreted. It catalyses the reaction Hydrolysis of terminal, non-reducing beta-D-mannose residues in beta-D-mannosides.. The protein operates within glycan metabolism; N-glycan degradation. Its function is as follows. Exoglycosidase that cleaves the single beta-linked mannose residue from the non-reducing end of beta-mannosidic oligosaccharides of various complexity and length. Involved in the degradation of polymeric mannan and galactomannan. The chain is Beta-mannosidase A (mndA) from Aspergillus oryzae (strain ATCC 42149 / RIB 40) (Yellow koji mold).